Here is a 417-residue protein sequence, read N- to C-terminus: MAWLSFYLLNVLWAVAGTSTRAQRSCSVPPDQQPWVNGLQLLMENSVTESDLPNPSILIAMNLASTYNLEAQKLLTYQLMASDSADLTNGQLALTIMALTSSCRDPGSKVSILQKNMESWTPSNLGAESSSFYGPALAILALCQKNSEATLPIAVRFAKTLMMESSPFSVDTGAVATLALTCMYNRIPVGSQENYRDLFGQALKVIVDNISLRIKADGIIGDIYSTGLAMQALSVTPEQPTKEWDCEKTMYTILKEIKQGKFQNPMSIAQILPSLKGKTYLDVPQVTCGPDHEVPPTLTDYPTPVPTSISNITVIYTINNQLRGVDLLFNVTIEVSVKSGSVLLAVLEEAQRRNHMFKFETTMTSWGLIVSSINNIAENVKHKTYWEFLSGKTPLGEGVAYYIPFNYEHITANFTQY.

Residues 1–18 form the signal peptide; sequence MAWLSFYLLNVLWAVAGT. Intrachain disulfides connect cysteine 26-cysteine 246, cysteine 103-cysteine 288, and cysteine 143-cysteine 182. Residue aspartate 171 participates in cob(II)alamin binding. Serine 191 is modified (phosphoserine). Asparagine 209 carries N-linked (GlcNAc...) asparagine glycosylation. Cob(II)alamin contacts are provided by aspartate 222 and glutamine 270. N-linked (GlcNAc...) asparagine glycosylation is found at asparagine 311 and asparagine 330. Cob(II)alamin-binding positions include 365 to 370 and 386 to 395; these read SWGLIV and WEFLSGKTPL. An N-linked (GlcNAc...) asparagine glycan is attached at asparagine 413.

It belongs to the eukaryotic cobalamin transport proteins family. As to quaternary structure, interacts with CUBN (via CUB domains). Post-translationally, the N-terminus is blocked. In terms of tissue distribution, gastric mucosa.

Its subcellular location is the secreted. Promotes absorption of the essential vitamin cobalamin (Cbl) in the ileum. After interaction with CUBN, the CBLIF-cobalamin complex is internalized via receptor-mediated endocytosis. The chain is Cobalamin binding intrinsic factor from Rattus norvegicus (Rat).